The following is a 246-amino-acid chain: Proteasome subunit alpha (246 aa).

This sequence belongs to the peptidase T1A family. The 20S proteasome core is composed of 14 alpha and 14 beta subunits that assemble into four stacked heptameric rings, resulting in a barrel-shaped structure. The two inner rings, each composed of seven catalytic beta subunits, are sandwiched by two outer rings, each composed of seven alpha subunits. The catalytic chamber with the active sites is on the inside of the barrel. Has a gated structure, the ends of the cylinder being occluded by the N-termini of the alpha-subunits. Is capped by the proteasome-associated ATPase, ARC. Can also interact with the bacterial proteasome activator Bpa through the C-terminal hydrophobic-tyrosine-X motif (HbYX motif) of Bpa; Bpa forms a homooligomeric ring-like structure which stacks co-axially with the proteasomal alpha-rings. Post-translationally, pupylated at an undetermined lysine residue by the prokaryotic ubiquitin-like protein Pup with the help of the ligase PafA, which leads to its degradation by the proteasome and thereby constitutes a negative auto-regulation.

The protein resides in the cytoplasm. It participates in protein degradation; proteasomal Pup-dependent pathway. With respect to regulation, the formation of the proteasomal ATPase ARC-20S proteasome complex, likely via the docking of the C-termini of ARC into the intersubunit pockets in the alpha-rings, may trigger opening of the gate for substrate entry. Interconversion between the open-gate and close-gate conformations leads to a dynamic regulation of the 20S proteasome proteolysis activity. PPS auto-regulates its own activity via pupylation and degradation of its components. Peptidolytic activity is inhibited by N-acetyl-Leu-Leu-norleucinal (Ac-LLnL) in vitro. Functionally, component of the proteasome core, a large protease complex with broad specificity involved in protein degradation. The M.smegmatis proteasome is able to cleave oligopeptides after hydrophobic residues, thus displaying chymotrypsin-like activity. In complex with the ATPase Mpa, degrades protein targets conjugated to a prokaryotic ubiquitin-like protein (Pup). Identified substrates of the M.smegmatis proteasome are the pupylated SodA and Ino1 proteins. The Pup-proteasome system (PPS) is essential for survival under starvation; PPS likely functions to recycle amino acids under nitrogen starvation, thereby enabling the cell to maintain basal metabolic activities. This is Proteasome subunit alpha from Mycolicibacterium smegmatis (strain ATCC 700084 / mc(2)155) (Mycobacterium smegmatis).